The sequence spans 467 residues: Cysteine--tRNA ligase (467 aa).

Residue cysteine 28 coordinates Zn(2+). The 'HIGH' region motif lies at 30–40 (PTVYNYIHVGN). Residues cysteine 212, histidine 237, and glutamate 241 each contribute to the Zn(2+) site. Positions 269 to 273 (KMSKS) match the 'KMSKS' region motif. Lysine 272 lines the ATP pocket.

Belongs to the class-I aminoacyl-tRNA synthetase family. As to quaternary structure, monomer. The cofactor is Zn(2+).

The protein resides in the cytoplasm. It carries out the reaction tRNA(Cys) + L-cysteine + ATP = L-cysteinyl-tRNA(Cys) + AMP + diphosphate. This Oenococcus oeni (strain ATCC BAA-331 / PSU-1) protein is Cysteine--tRNA ligase.